A 326-amino-acid polypeptide reads, in one-letter code: MAEGKGRVCVTGGTGFLGSWIIKSLLENGYSVNTTIRADPERKRDVSFLTNLPGASEKLHFFNADLSNPDSFAAAIEGCVGIFHTASPIDFAVSEPEEIVTKRTVDGALGILKACVNSKTVKRFIYTSSGSAVSFNGKDKDVLDESDWSDVDLLRSVKPFGWNYAVSKTLAEKAVLEFGEQNGIDVVTLILPFIVGRFVCPKLPDSIEKALVLVLGKKEQIGVTRFHMVHVDDVARAHIYLLENSVPGGRYNCSPFIVPIEEMSQLLSAKYPEYQILTVDELKEIKGARLPDLNTKKLVDAGFDFKYTIEDMFDDAIQCCKEKGYL.

NADP(+) contacts are provided by residues 12–18 (GGTGFLG), Arg-37, and Tyr-164.

The protein belongs to the NAD(P)-dependent epimerase/dehydratase family. Dihydroflavonol-4-reductase subfamily. Monomer. In terms of tissue distribution, detected in roots, and at lower levels in root nodules. Not detected in petioles, leaf and stem.

The catalysed reaction is a (3R,4R)-4,2'-dihydroxyisoflavan + NADP(+) = a (3R)-2'-hydroxyisoflavanone + NADPH + H(+). With respect to regulation, inhibited by vestitone concentrations above 50 uM. Functionally, stereospecific enzyme that catalyzes the NADPH-dependent reduction of (3R)-vestitone to (3R,4R)-4'-methoxyisoflavan-2',4,7-triol (DMI). Has no activity with (3S)-vestitone. Catalyzes the penultimate step in the biosynthesis of the phytoalexin medicarpin, and thereby contributes to plant defense reactions. The polypeptide is Vestitone reductase (Medicago sativa (Alfalfa)).